Here is a 185-residue protein sequence, read N- to C-terminus: MKIINPILPIIENILGNLTALQAEGKITTQPIERIALQWYESERNILRKTTNTGREVAFRLLKEGQRLKHDDVVFISDELVIAIEILPSEVIVLSPKTLPEMARACYEIGNKHSPLFLDGDEVTLPYDKPMFEWLQAAGFHPQKAERRLSQALRANSAQGHGHSHSHSHDHHGYHHHGDGNWHKH.

The tract at residues 153 to 185 is disordered; the sequence is LRANSAQGHGHSHSHSHDHHGYHHHGDGNWHKH. The segment covering 162–175 has biased composition (basic residues); that stretch reads GHSHSHSHDHHGYH. Residues 176–185 are compositionally biased toward basic and acidic residues; sequence HHGDGNWHKH.

It belongs to the UreE family.

It localises to the cytoplasm. In terms of biological role, involved in urease metallocenter assembly. Binds nickel. Probably functions as a nickel donor during metallocenter assembly. This is Urease accessory protein UreE from Haemophilus influenzae (strain PittGG).